The sequence spans 258 residues: Leucyl/phenylalanyl-tRNA--protein transferase (258 aa).

The disordered stretch occupies residues 199–220; it reads GGSDGPAPDQSIGMSSSGGVSD. Residues 209-220 are compositionally biased toward low complexity; that stretch reads SIGMSSSGGVSD.

The protein belongs to the L/F-transferase family.

The protein resides in the cytoplasm. It carries out the reaction N-terminal L-lysyl-[protein] + L-leucyl-tRNA(Leu) = N-terminal L-leucyl-L-lysyl-[protein] + tRNA(Leu) + H(+). The catalysed reaction is N-terminal L-arginyl-[protein] + L-leucyl-tRNA(Leu) = N-terminal L-leucyl-L-arginyl-[protein] + tRNA(Leu) + H(+). It catalyses the reaction L-phenylalanyl-tRNA(Phe) + an N-terminal L-alpha-aminoacyl-[protein] = an N-terminal L-phenylalanyl-L-alpha-aminoacyl-[protein] + tRNA(Phe). Its function is as follows. Functions in the N-end rule pathway of protein degradation where it conjugates Leu, Phe and, less efficiently, Met from aminoacyl-tRNAs to the N-termini of proteins containing an N-terminal arginine or lysine. The sequence is that of Leucyl/phenylalanyl-tRNA--protein transferase from Hyphomonas neptunium (strain ATCC 15444).